The sequence spans 374 residues: Cell wall integrity and stress response component 1 (374 aa).

A signal peptide spans 1 to 29; it reads MVFLNSSPFKGRLLFFVYLLIISTRLVAA. Residues 30 to 292 are Extracellular-facing; the sequence is DMNTQYGCYL…SNHTSLNAGA (263 aa). Residues 31-119 enclose the WSC domain; sequence MNTQYGCYLV…DLYWSVYLTG (89 aa). Residues 132 to 236 form a disordered region; that stretch reads VSSTTSSSSS…SSSSSSRPSS (105 aa). N-linked (GlcNAc...) asparagine glycosylation is found at N278 and N284. A helical transmembrane segment spans residues 293 to 313; it reads IVGIVIGCVAFAVVMALCIFL. At 314–374 the chain is on the cytoplasmic side; that stretch reads YFYFRRFKIR…RKILRVTNLN (61 aa). Residue S354 is modified to Phosphoserine.

In terms of processing, O-mannosylated.

The protein localises to the membrane. The protein is Cell wall integrity and stress response component 1 (wsc1) of Schizosaccharomyces pombe (strain 972 / ATCC 24843) (Fission yeast).